The following is a 226-amino-acid chain: Protein-L-isoaspartate O-methyltransferase (226 aa).

Ser75 is an active-site residue.

The protein belongs to the methyltransferase superfamily. L-isoaspartyl/D-aspartyl protein methyltransferase family.

The protein localises to the cytoplasm. The enzyme catalyses [protein]-L-isoaspartate + S-adenosyl-L-methionine = [protein]-L-isoaspartate alpha-methyl ester + S-adenosyl-L-homocysteine. Functionally, catalyzes the methyl esterification of L-isoaspartyl residues in peptides and proteins that result from spontaneous decomposition of normal L-aspartyl and L-asparaginyl residues. It plays a role in the repair and/or degradation of damaged proteins. This chain is Protein-L-isoaspartate O-methyltransferase, found in Lawsonia intracellularis (strain PHE/MN1-00).